The primary structure comprises 199 residues: GTP-binding protein Di-Ras2 (199 aa).

GTP is bound by residues 14 to 21, 33 to 39, 61 to 65, and 121 to 124; these read GAGGVGKS, RESYIPT, DTTGS, and NKCD. S35 is modified (phosphoserine). An Effector region motif is present at residues 36-44; sequence YIPTVEDTY. At S126 the chain carries Phosphoserine. 152–153 contributes to the GTP binding site; the sequence is AK. The residue at position 196 (C196) is a Cysteine methyl ester. C196 is lipidated: S-geranylgeranyl cysteine. The propeptide at 197–199 is removed in mature form; sequence VIM.

Belongs to the small GTPase superfamily. Di-Ras family. Post-translationally, ubiquitinated by the ECS(ASB11) complex via 'Lys-11'-linked ubiquitin chains, leading to its degradation by the proteasome.

The protein localises to the cell membrane. The enzyme catalyses GTP + H2O = GDP + phosphate + H(+). Its function is as follows. Displays low GTPase activity and exists predominantly in the GTP-bound form. This chain is GTP-binding protein Di-Ras2 (DIRAS2), found in Macaca fascicularis (Crab-eating macaque).